A 404-amino-acid chain; its full sequence is Formate-dependent phosphoribosylglycinamide formyltransferase (404 aa).

N(1)-(5-phospho-beta-D-ribosyl)glycinamide is bound by residues Glu25 to Leu26 and Glu85. ATP is bound by residues Arg118, Lys159, Ser164–Gln169, Glu199–Ile202, and Glu207. Positions Arg123–Leu318 constitute an ATP-grasp domain. Mg(2+) is bound by residues Glu277 and Glu289. Residues Asp296, Lys365, and Arg372–Arg373 contribute to the N(1)-(5-phospho-beta-D-ribosyl)glycinamide site. Residues Thr384–Lys404 form a disordered region. The segment covering Lys392 to Lys404 has biased composition (low complexity).

Belongs to the PurK/PurT family. Homodimer.

It catalyses the reaction N(1)-(5-phospho-beta-D-ribosyl)glycinamide + formate + ATP = N(2)-formyl-N(1)-(5-phospho-beta-D-ribosyl)glycinamide + ADP + phosphate + H(+). The protein operates within purine metabolism; IMP biosynthesis via de novo pathway; N(2)-formyl-N(1)-(5-phospho-D-ribosyl)glycinamide from N(1)-(5-phospho-D-ribosyl)glycinamide (formate route): step 1/1. Involved in the de novo purine biosynthesis. Catalyzes the transfer of formate to 5-phospho-ribosyl-glycinamide (GAR), producing 5-phospho-ribosyl-N-formylglycinamide (FGAR). Formate is provided by PurU via hydrolysis of 10-formyl-tetrahydrofolate. This chain is Formate-dependent phosphoribosylglycinamide formyltransferase, found in Paraburkholderia xenovorans (strain LB400).